The sequence spans 443 residues: Probable glycine dehydrogenase (decarboxylating) subunit 1 (443 aa).

This sequence belongs to the GcvP family. N-terminal subunit subfamily. As to quaternary structure, the glycine cleavage system is composed of four proteins: P, T, L and H. In this organism, the P 'protein' is a heterodimer of two subunits.

The enzyme catalyses N(6)-[(R)-lipoyl]-L-lysyl-[glycine-cleavage complex H protein] + glycine + H(+) = N(6)-[(R)-S(8)-aminomethyldihydrolipoyl]-L-lysyl-[glycine-cleavage complex H protein] + CO2. Functionally, the glycine cleavage system catalyzes the degradation of glycine. The P protein binds the alpha-amino group of glycine through its pyridoxal phosphate cofactor; CO(2) is released and the remaining methylamine moiety is then transferred to the lipoamide cofactor of the H protein. This is Probable glycine dehydrogenase (decarboxylating) subunit 1 from Oleidesulfovibrio alaskensis (strain ATCC BAA-1058 / DSM 17464 / G20) (Desulfovibrio alaskensis).